A 506-amino-acid polypeptide reads, in one-letter code: NAD(P)H-quinone oxidoreductase subunit 2 (506 aa).

The next 14 membrane-spanning stretches (helical) occupy residues Ala14 to Ala34, Trp42 to Trp62, Leu79 to Trp99, Pro108 to Gly128, Leu132 to Tyr152, Leu167 to Leu187, Phe206 to Val226, Pro240 to Ile260, Leu276 to Gln296, Met302 to Thr322, Val330 to Phe350, Leu374 to Gly394, Leu409 to Ile429, and Ile462 to Phe482.

It belongs to the complex I subunit 2 family. As to quaternary structure, NDH-1 can be composed of about 15 different subunits; different subcomplexes with different compositions have been identified which probably have different functions.

It localises to the cellular thylakoid membrane. The catalysed reaction is a plastoquinone + NADH + (n+1) H(+)(in) = a plastoquinol + NAD(+) + n H(+)(out). The enzyme catalyses a plastoquinone + NADPH + (n+1) H(+)(in) = a plastoquinol + NADP(+) + n H(+)(out). NDH-1 shuttles electrons from an unknown electron donor, via FMN and iron-sulfur (Fe-S) centers, to quinones in the respiratory and/or the photosynthetic chain. The immediate electron acceptor for the enzyme in this species is believed to be plastoquinone. Couples the redox reaction to proton translocation, and thus conserves the redox energy in a proton gradient. Cyanobacterial NDH-1 also plays a role in inorganic carbon-concentration. The polypeptide is NAD(P)H-quinone oxidoreductase subunit 2 (Prochlorococcus marinus subsp. pastoris (strain CCMP1986 / NIES-2087 / MED4)).